A 632-amino-acid chain; its full sequence is Putative ferric transport system permease protein FbpB 1 (632 aa).

15 helical membrane-spanning segments follow: residues 5–25, 37–57, 58–78, 93–113, 144–164, 178–198, 223–243, 270–290, 299–319, 330–350, 377–397, 436–456, 469–489, 490–510, and 547–567; these read SFNL…LPLL, LFLT…YKIS, MGYS…LSLA, LLCI…AIFV, LFLS…FALY, IFSI…VTLM, GFNG…FMIL, YQII…IVFI, PLVL…YIAG, LGSM…IWIG, IIGM…SIFY, IYAG…AYIV, FLTM…YILA, FNNA…SMVM, and CFIV…TSFV. The ABC transmembrane type-1 1 domain occupies 140-345; it reads ITNSLFLSGF…IFSLAIFIIQ (206 aa). In terms of domain architecture, ABC transmembrane type-1 2 spans 431–632; that stretch reads LINTLIYAGI…DCRRYAYFPF (202 aa).

The protein belongs to the binding-protein-dependent transport system permease family. FbpB subfamily. As to quaternary structure, the complex is composed of two ATP-binding proteins (FbpC), two transmembrane proteins (FbpB) and a solute-binding protein (FbpA).

The protein resides in the cell inner membrane. Functionally, part of the ABC transporter complex FbpABC (TC 3.A.1.10.1) involved in Fe(3+) ions import. Probably responsible for the translocation of the substrate across the membrane. The sequence is that of Putative ferric transport system permease protein FbpB 1 (fbpB1) from Haemophilus influenzae (strain ATCC 51907 / DSM 11121 / KW20 / Rd).